The chain runs to 382 residues: Guanine nucleotide-binding protein G(s) subunit alpha (382 aa).

Over residues methionine 1–valine 14 the composition is skewed to polar residues. Positions methionine 1–arginine 31 are disordered. Glycine 2 is lipidated: N-palmitoyl glycine. A lipid anchor (S-palmitoyl cysteine) is attached at cysteine 3. Over residues glutamate 17–arginine 31 the composition is skewed to basic and acidic residues. One can recognise a G-alpha domain in the interval alanine 42–leucine 382. The tract at residues arginine 45 to threonine 58 is G1 motif. Residues glycine 50–serine 57, alanine 51–threonine 58, leucine 186–threonine 192, aspartate 211–glutamine 215, valine 212–arginine 216, asparagine 280–aspartate 283, lysine 281–leucine 284, and alanine 354 contribute to the GTP site. The Mg(2+) site is built by serine 57 and threonine 192. A G2 motif region spans residues aspartate 184–threonine 192. Residues phenylalanine 207 to arginine 216 are G3 motif. A G4 motif region spans residues isoleucine 276–aspartate 283. Positions threonine 352 to threonine 357 are G5 motif.

This sequence belongs to the G-alpha family. G(s) subfamily. G proteins are composed of 3 units; alpha, beta and gamma. The alpha chain contains the guanine nucleotide binding site.

Its function is as follows. Guanine nucleotide-binding proteins (G proteins) are involved as modulators or transducers in various transmembrane signaling systems. The G(s) protein is involved in hormonal regulation of adenylate cyclase: it activates the cyclase. This is Guanine nucleotide-binding protein G(s) subunit alpha (G-salpha60A) from Drosophila pseudoobscura pseudoobscura (Fruit fly).